A 588-amino-acid polypeptide reads, in one-letter code: MDEMDEIVRIVNDSMWYVPNAFMDDGDNEGHISVNNVCHMYLAFFDVDISSHLFKLVIKHCDLNKRLKCGNSPLHCYTMNTRFNPSVLKILLRHGMRNFDSKDKKGHIPLHHYLIHSLSIDNKIFDILTDPIDDFSKSSDLLLCYLRYKFNGSLNYYVLYKLLTKGSDPNCVDEDGLTSLHYYCKHISAFHESNYYKSKSHTKMRAEKRFIYAIIDHGANINAVTKIGNTPLHTYLQQYTKHSPRVVYALLSRGADTRIRNNLDCTPIMEYIKNDCATGHILIMLLNWHEQKYGKLQKEEGQHLLYLFIKHNQGYGSRSLNILRYLLDRFDIQKDEYYNTMTPLHTAFQNCNNNVASYLVYIGYDINLPTKDDKTVFDLVFENRNIIYKADVVNDIIHHRLKVSLPMIKSLFYKMSEFSPYDDHYVKKIIAYCLLRDESFAELHTKFCLNEDYKSVFMKNISFDKIDSIIEKCSRDISLLKEIRISDTDLYTVLRTEDIRYHTYLEAIHSDKRISFPMYDDLIEQCHLSMEHKSKLVDKALNKLESTIDSQSRLSYLPPEIMRNIITKLSDYHLNSMLYGKNHYKYYP.

ANK repeat units lie at residues Cys69 to Ser101, Asp175 to Ala223, Ile227 to Ile259, Glu300 to Glu336, and Asn339 to Leu368. Positions Leu557–Leu574 are PRANC/F-box-like.

This sequence belongs to the orthopoxvirus OPG003 family.

May be involved in virus-host protein interaction through the ankyrin repeats and PRANC regions. The sequence is that of Ankyrin repeat protein OPG003 (OPG003) from Cynomys gunnisoni (Gunnison's prairie dog).